A 134-amino-acid chain; its full sequence is RxLR effector protein Avh238 (134 aa).

The first 21 residues, 1–21 (MRGVFFVAVAVAIFARSSAEA), serve as a signal peptide directing secretion. The short motif at 44-68 (RFLRVADPEDDDLAAPADDGKTEER) is the RxLR-dEER element. A disordered region spans residues 49-70 (ADPEDDDLAAPADDGKTEERAP). Over residues 61 to 70 (DDGKTEERAP) the composition is skewed to basic and acidic residues.

The protein belongs to the RxLR effector family. In terms of assembly, interacts with host 1-aminocyclopropane-1-carboxylate synthases ACS1, ACS2, ACS3, ACS10 and ACS12.

It localises to the secreted. The protein localises to the host cytoplasm. Its subcellular location is the host nucleus. Functionally, effector that suppresses plant defense responses during the early stages of pathogen infection. Suppresses cell death induced by effectors and PAMPs in plant hosts. Is able to induced cell death in tomato, tobacco, eggplant, and potato, but not in A.thaliana. Interacts with and destabilizes host 1-aminocyclopropane-1-carboxylate synthases. By suppressing type2 ACS-catalyzed ethylene biosynthesis, Avh238 facilitates Phytophthora infection. This chain is RxLR effector protein Avh238 (Avh238), found in Phytophthora sojae (strain P6497) (Soybean stem and root rot agent).